Consider the following 698-residue polypeptide: MARKTPIERYRNIGISAHIDAGKTTTTERILYYTGVNHKIGEVHDGAATMDWMAQEQERGITITSAATTCFWKGMDLNFPEHRFNIIDTPGHVDFTIEVERSMRVLDGACMVYCAVGGVQPQSETVWRQATKYKVPRLAFVNKMDRSGANFYKVVDQMKMRLKANPVPIVLPIGAEEGFKGVVDLIKMKAIIWDEASQGMKFEYQDIPAELQGDAETWREQMVEAAAEANEDLMNEYLENGDLSEEKIKLGLRTRTIACEIQPMLCGTAFKNKGVQRMLDAVIEFLPSPVDIPPVAGVDDNEKEVTRKADDKEKFAALAFKLMTDPFVGQLTFVRVYSGVLNSGETVLNSVKNKKERIGRILQMHANEREEIKEVLAGDIAACVGLKEVTTGETLCDPSAPIILERMVFPDPVIHVAVEPKTKGDQEKMGIALGRLAAEDPSFRVRTDEESGQTIISGMGELHLEIIVDRMKREFNVEANVGAPQVAYREAIRKAVEQEGKFVKQSGGRGQYGHVWIKLEPNETGKGYEFVDAIKGGVVPREYIPAVDKGLQETLPNGVLAGFPVVDVKVTLFDGSYHDVDSNENAFKMAASMAFKDAMRKANPILLEPMMAVVVETPEDYMGNVMGDLSGRRGIVQGMDDLPGGMKEIKAEVPLAEMFGYATQLRSLTQGRATYSMEFKHYSEAPKSVAEAVISNRK.

One can recognise a tr-type G domain in the interval 8–290; it reads ERYRNIGISA…AVIEFLPSPV (283 aa). GTP-binding positions include 17–24, 88–92, and 142–145; these read AHIDAGKT, DTPGH, and NKMD.

This sequence belongs to the TRAFAC class translation factor GTPase superfamily. Classic translation factor GTPase family. EF-G/EF-2 subfamily.

It localises to the cytoplasm. In terms of biological role, catalyzes the GTP-dependent ribosomal translocation step during translation elongation. During this step, the ribosome changes from the pre-translocational (PRE) to the post-translocational (POST) state as the newly formed A-site-bound peptidyl-tRNA and P-site-bound deacylated tRNA move to the P and E sites, respectively. Catalyzes the coordinated movement of the two tRNA molecules, the mRNA and conformational changes in the ribosome. The chain is Elongation factor G from Azoarcus sp. (strain BH72).